A 92-amino-acid polypeptide reads, in one-letter code: Large ribosomal subunit protein eL37 (92 aa).

Zn(2+)-binding residues include Cys-19, Cys-22, Cys-34, and Cys-37. A C4-type zinc finger spans residues 19–37 (CRRCGRSSYHIQKSKCAQC).

This sequence belongs to the eukaryotic ribosomal protein eL37 family. Zn(2+) is required as a cofactor.

Functionally, binds to the 23S rRNA. This chain is Large ribosomal subunit protein eL37 (RpL37), found in Spodoptera frugiperda (Fall armyworm).